We begin with the raw amino-acid sequence, 460 residues long: Probable Xaa-Pro aminopeptidase PEPP (460 aa).

Mn(2+)-binding residues include D256, D267, E390, and E430.

Belongs to the peptidase M24B family. Mn(2+) is required as a cofactor.

It catalyses the reaction Release of any N-terminal amino acid, including proline, that is linked to proline, even from a dipeptide or tripeptide.. Its function is as follows. Catalyzes the removal of a penultimate prolyl residue from the N-termini of peptides. In Podospora anserina (strain S / ATCC MYA-4624 / DSM 980 / FGSC 10383) (Pleurage anserina), this protein is Probable Xaa-Pro aminopeptidase PEPP (PEPP).